The chain runs to 156 residues: Hydrogenase 3 maturation protease (156 aa).

3 residues coordinate Ni(2+): aspartate 16, aspartate 62, and histidine 90.

This sequence belongs to the peptidase A31 family. In terms of assembly, monomer.

It carries out the reaction This enzyme specifically removes a 32-amino acid peptide from the C-terminus of the precursor of the large subunit of E.coli hydrogenase 3 by cleavage at the C-terminal side of Arg-537.. Its function is as follows. Protease involved in the C-terminal processing of HycE, the large subunit of hydrogenase 3. The sequence is that of Hydrogenase 3 maturation protease (hycI) from Escherichia coli O157:H7.